The sequence spans 408 residues: Putative transporter AmpG 2 (408 aa).

Transmembrane regions (helical) follow at residues 11 to 31 (IFNI…YLLT), 49 to 69 (IGLF…GPLL), 84 to 104 (YCLV…TSFN), 110 to 130 (TPFV…DMLI), 154 to 174 (FRIG…IISW), 177 to 197 (VYRT…FYPL), 224 to 244 (WIVI…LSIM), 261 to 281 (IGYK…GGFL), 294 to 311 (VLIY…LYFL), 315 to 337 (IISL…SPFF), 353 to 373 (IALI…ISGY), and 382 to 402 (YFFI…LYLP).

The protein belongs to the major facilitator superfamily.

It localises to the cell inner membrane. The protein is Putative transporter AmpG 2 (ampG2) of Rickettsia typhi (strain ATCC VR-144 / Wilmington).